Consider the following 154-residue polypeptide: Large ribosomal subunit protein uL13 (154 aa).

This sequence belongs to the universal ribosomal protein uL13 family. In terms of assembly, part of the 50S ribosomal subunit.

Functionally, this protein is one of the early assembly proteins of the 50S ribosomal subunit, although it is not seen to bind rRNA by itself. It is important during the early stages of 50S assembly. This is Large ribosomal subunit protein uL13 from Bartonella tribocorum (strain CIP 105476 / IBS 506).